The primary structure comprises 241 residues: Ribonuclease PH (241 aa).

Phosphate contacts are provided by residues Arg89 and Gly127–Arg129.

It belongs to the RNase PH family. As to quaternary structure, homohexameric ring arranged as a trimer of dimers.

The catalysed reaction is tRNA(n+1) + phosphate = tRNA(n) + a ribonucleoside 5'-diphosphate. Its function is as follows. Phosphorolytic 3'-5' exoribonuclease that plays an important role in tRNA 3'-end maturation. Removes nucleotide residues following the 3'-CCA terminus of tRNAs; can also add nucleotides to the ends of RNA molecules by using nucleoside diphosphates as substrates, but this may not be physiologically important. Probably plays a role in initiation of 16S rRNA degradation (leading to ribosome degradation) during starvation. The sequence is that of Ribonuclease PH from Xylella fastidiosa (strain M23).